Consider the following 320-residue polypeptide: Chorion protein S36 (320 aa).

An N-terminal signal peptide occupies residues 1 to 18 (MNCFLFTLFFVAAPLATA). Tandem repeats lie at residues 178–181 (AAPV), 258–261 (AAPA), 266–269 (AAPA), 274–277 (AAPA), and A290. The interval 259–320 (APAQSYNAAP…YGSAPPASGY (62 aa)) is disordered.

The protein belongs to the chorion protein S36 family.

It localises to the secreted. Chorion membrane (egg shell) protein; plays a role in protecting the egg from the environment. This chain is Chorion protein S36 (Cp36), found in Ceratitis capitata (Mediterranean fruit fly).